We begin with the raw amino-acid sequence, 281 residues long: Non-selective voltage-gated ion channel 2 (281 aa).

ATP-binding residues include Arg11 and Arg19.

Belongs to the eukaryotic mitochondrial porin family.

The protein resides in the mitochondrion outer membrane. Non-selective voltage-gated ion channel that mediates the transport of anions and cations through the mitochondrion outer membrane. The channel adopts an open conformation at low or zero membrane potential and a closed conformation at potentials above 30-40 mV. The open state has a weak anion selectivity whereas the closed state is cation-selective. Does not confer permeability to NADH. In terms of biological role, catalyzes the scrambling of phospholipids across the outer mitochondrial membrane; the mechanism is unrelated to channel activity and is capable of translocating both anionic and zwitterionic phospholipids. This chain is Non-selective voltage-gated ion channel 2 (POR2), found in Saccharomyces cerevisiae (strain ATCC 204508 / S288c) (Baker's yeast).